The sequence spans 292 residues: Phosphatidylglycerol--prolipoprotein diacylglyceryl transferase (292 aa).

6 helical membrane passes run 25 to 45, 70 to 90, 101 to 121, 138 to 158, 193 to 213, and 255 to 275; these read IALHWYGLGYVVGILFAWWYA, FVVWSAISVVVGGRLGQVLVW, AIIAVWDGGMSFHGGFIGIII, FDIVAAGAPIGIGIVRICNFI, FMEGFLLFIILFIIIFAFKAL, and GFTYGMALSLPMLFFGIYLLL. A 1,2-diacyl-sn-glycero-3-phospho-(1'-sn-glycerol) is bound at residue arginine 153.

Belongs to the Lgt family.

It is found in the cell inner membrane. The catalysed reaction is L-cysteinyl-[prolipoprotein] + a 1,2-diacyl-sn-glycero-3-phospho-(1'-sn-glycerol) = an S-1,2-diacyl-sn-glyceryl-L-cysteinyl-[prolipoprotein] + sn-glycerol 1-phosphate + H(+). The protein operates within protein modification; lipoprotein biosynthesis (diacylglyceryl transfer). Functionally, catalyzes the transfer of the diacylglyceryl group from phosphatidylglycerol to the sulfhydryl group of the N-terminal cysteine of a prolipoprotein, the first step in the formation of mature lipoproteins. The chain is Phosphatidylglycerol--prolipoprotein diacylglyceryl transferase from Bartonella quintana (strain Toulouse) (Rochalimaea quintana).